Consider the following 437-residue polypeptide: MPVIDETPMTYTEACRYFPGGVNSPIRACIPVGIVPPIVSSASRDVFIDSFGKNFIDFCGSWGSLIHGHSHPKILDALCSAASQGTSYGLTSENEISLATTLFSCLGLQDHKLRFVSSGTEAAMTSVRLACGVTQRSVMIKFLGCYHGHADVLLKGMTIDENNLMEVPHLVDRYFSSDPCLPLTLILPYNDLKTFEEVMEKIGERVACVIFEPIAINMGVVLPEAGWIESIITTCRRYGALSIMDEVVTGFRMGSRGMRSILDVTPDITVYGKILGGGMPVAAVLAHQSIMEHLMPVGTVFQAGTLSGNPIAMAAGQASIELCQERDFYPKLENLTEGFLSPIEDFIRCKGFPIALVRAGSMFSFFFRETPPRNLRDVQECDQKTFGIFYRHAFSRGVYLSPASMEASFISSVHSRENLAYTQNVLIDSLVKTFEGI.

At Lys273 the chain carries N6-(pyridoxal phosphate)lysine.

Belongs to the class-III pyridoxal-phosphate-dependent aminotransferase family. HemL subfamily. In terms of assembly, homodimer. It depends on pyridoxal 5'-phosphate as a cofactor.

The protein resides in the cytoplasm. The catalysed reaction is (S)-4-amino-5-oxopentanoate = 5-aminolevulinate. It functions in the pathway porphyrin-containing compound metabolism; protoporphyrin-IX biosynthesis; 5-aminolevulinate from L-glutamyl-tRNA(Glu): step 2/2. This is Glutamate-1-semialdehyde 2,1-aminomutase from Chlamydia caviae (strain ATCC VR-813 / DSM 19441 / 03DC25 / GPIC) (Chlamydophila caviae).